Consider the following 388-residue polypeptide: Succinate--CoA ligase [ADP-forming] subunit beta (388 aa).

Positions 9-244 constitute an ATP-grasp domain; sequence KSLFAEYGLP…PSQDDAREAH (236 aa). Residues Lys-46, 53 to 55, Glu-99, Thr-102, and Glu-107 each bind ATP; that span reads GRG. Mg(2+) contacts are provided by Asn-199 and Asp-213. Substrate-binding positions include Asn-264 and 321-323; that span reads GIV.

This sequence belongs to the succinate/malate CoA ligase beta subunit family. As to quaternary structure, heterotetramer of two alpha and two beta subunits. It depends on Mg(2+) as a cofactor.

It carries out the reaction succinate + ATP + CoA = succinyl-CoA + ADP + phosphate. The catalysed reaction is GTP + succinate + CoA = succinyl-CoA + GDP + phosphate. It participates in carbohydrate metabolism; tricarboxylic acid cycle; succinate from succinyl-CoA (ligase route): step 1/1. Succinyl-CoA synthetase functions in the citric acid cycle (TCA), coupling the hydrolysis of succinyl-CoA to the synthesis of either ATP or GTP and thus represents the only step of substrate-level phosphorylation in the TCA. The beta subunit provides nucleotide specificity of the enzyme and binds the substrate succinate, while the binding sites for coenzyme A and phosphate are found in the alpha subunit. This Shewanella frigidimarina (strain NCIMB 400) protein is Succinate--CoA ligase [ADP-forming] subunit beta.